The sequence spans 377 residues: Sodium-dependent organic anion transporter (377 aa).

Residues M1–N29 lie on the Extracellular side of the membrane. N4 is a glycosylation site (N-linked (GlcNAc...) asparagine). Residues L30–G50 traverse the membrane as a helical segment. Residues C51 to G67 are Cytoplasmic-facing. Residues I68–I88 form a helical membrane-spanning segment. Residues S89–A97 lie on the Extracellular side of the membrane. The helical transmembrane segment at I98 to W118 threads the bilayer. The Cytoplasmic portion of the chain corresponds to V119–S133. A helical membrane pass occupies residues T134 to L154. The Extracellular portion of the chain corresponds to Q155–T159. A glycan (N-linked (GlcNAc...) asparagine) is linked at N157. Residues I160–V180 traverse the membrane as a helical segment. The Cytoplasmic portion of the chain corresponds to Y181 to K195. A helical membrane pass occupies residues I196–A216. The Extracellular segment spans residues K217 to L226. Residues L227 to F247 form a helical membrane-spanning segment. The Cytoplasmic segment spans residues T248–N266. Residues I267–Q285 traverse the membrane as a helical segment. At M286 to P290 the chain is on the extracellular side. The chain crosses the membrane as a helical span at residues L291–Y311. Over K312–E377 the chain is Cytoplasmic.

Belongs to the bile acid:sodium symporter (BASS) (TC 2.A.28) family. In terms of processing, glycosylated. In terms of tissue distribution, highly expressed in testis, placenta and pancreas. Moderately expressed in heart, lung and mammary gland. Weakly expressed in brain, colon, kidney, liver, ovary, prostate, small intestine, spleen and thymus.

The protein localises to the membrane. It carries out the reaction estrone 3-sulfate(out) + 2 Na(+)(out) = estrone 3-sulfate(in) + 2 Na(+)(in). It catalyses the reaction 17beta-estradiol 3-sulfate(out) + 2 Na(+)(out) = 17beta-estradiol 3-sulfate(in) + 2 Na(+)(in). The enzyme catalyses dehydroepiandrosterone 3-sulfate(out) + 2 Na(+)(out) = dehydroepiandrosterone 3-sulfate(in) + 2 Na(+)(in). The catalysed reaction is androst-5-ene-diol 3-sulfate(out) + 2 Na(+)(out) = androst-5-ene-diol 3-sulfate(in) + 2 Na(+)(in). It carries out the reaction pregnenolone sulfate(out) + 2 Na(+)(out) = pregnenolone sulfate(in) + 2 Na(+)(in). It catalyses the reaction taurolithocholate 3-sulfate(out) + 2 Na(+)(out) = taurolithocholate 3-sulfate(in) + 2 Na(+)(in). The enzyme catalyses androsterone 3alpha-sulfate(out) + 2 Na(+)(out) = androsterone 3alpha-sulfate(in) + 2 Na(+)(in). The catalysed reaction is 5alpha-dihydrotestosterone sulfate(out) + 2 Na(+)(out) = 5alpha-dihydrotestosterone sulfate(in) + 2 Na(+)(in). It carries out the reaction 17beta-estradiol 17-sulfate(out) + 2 Na(+)(out) = 17beta-estradiol 17-sulfate(in) + 2 Na(+)(in). It catalyses the reaction 17alpha-hydroxypregnenolone 3-sulfate(out) + 2 Na(+)(out) = 17alpha-hydroxypregnenolone 3-sulfate(in) + 2 Na(+)(in). The enzyme catalyses epiandrosterone 3-sulfate(out) + 2 Na(+)(out) = epiandrosterone 3-sulfate(in) + 2 Na(+)(in). The catalysed reaction is epitestosterone 17-sulfate(out) + 2 Na(+)(out) = epitestosterone 17-sulfate(in) + 2 Na(+)(in). It carries out the reaction testosterone 17-sulfate(out) + 2 Na(+)(out) = testosterone 17-sulfate(in) + 2 Na(+)(in). It catalyses the reaction 16alpha-hydroxydehydroepiandrosterone 3-sulfate(out) + 2 Na(+)(out) = 16alpha-hydroxydehydroepiandrosterone 3-sulfate(in) + 2 Na(+)(in). In terms of biological role, transports sulfoconjugated steroid hormones from the extracellular compartment into the cytosol in a sodium-dependent manner without hydrolysis. Steroid sulfate hormones are commonly considered to be biologically inactive metabolites, that may be activated by steroid sulfatases into free steroids. May play an important role by delivering sulfoconjugated steroids to specific target cells in reproductive organs. May play a role transporting the estriol precursor 16alpha-hydroxydehydroepiandrosterone 3-sulfate (16a-OH-DHEAS) at the fetal blood vessel endothelium. Can also transport other sulfoconjugated molecules such as taurolithocholic acid-3-sulfate and sulfoconjugated pyrenes. This Homo sapiens (Human) protein is Sodium-dependent organic anion transporter (SLC10A6).